The following is a 274-amino-acid chain: Dermonecrotic toxin SdSicTox-betaIIB1bii (274 aa).

His-5 is a catalytic residue. Mg(2+)-binding residues include Glu-25 and Asp-27. Catalysis depends on His-41, which acts as the Nucleophile. Intrachain disulfides connect Cys-45-Cys-51 and Cys-47-Cys-190. Position 85 (Asp-85) interacts with Mg(2+).

This sequence belongs to the arthropod phospholipase D family. Class II subfamily. Mg(2+) serves as cofactor. As to expression, expressed by the venom gland.

It localises to the secreted. It catalyses the reaction an N-(acyl)-sphingosylphosphocholine = an N-(acyl)-sphingosyl-1,3-cyclic phosphate + choline. It carries out the reaction an N-(acyl)-sphingosylphosphoethanolamine = an N-(acyl)-sphingosyl-1,3-cyclic phosphate + ethanolamine. The enzyme catalyses a 1-acyl-sn-glycero-3-phosphocholine = a 1-acyl-sn-glycero-2,3-cyclic phosphate + choline. The catalysed reaction is a 1-acyl-sn-glycero-3-phosphoethanolamine = a 1-acyl-sn-glycero-2,3-cyclic phosphate + ethanolamine. Dermonecrotic toxins cleave the phosphodiester linkage between the phosphate and headgroup of certain phospholipids (sphingolipid and lysolipid substrates), forming an alcohol (often choline) and a cyclic phosphate. This toxin acts on sphingomyelin (SM). It may also act on ceramide phosphoethanolamine (CPE), lysophosphatidylcholine (LPC) and lysophosphatidylethanolamine (LPE), but not on lysophosphatidylserine (LPS), and lysophosphatidylglycerol (LPG). It acts by transphosphatidylation, releasing exclusively cyclic phosphate products as second products. Induces dermonecrosis, hemolysis, increased vascular permeability, edema, inflammatory response, and platelet aggregation. This Sicarius cf. damarensis (strain GJB-2008) (Six-eyed sand spider) protein is Dermonecrotic toxin SdSicTox-betaIIB1bii.